The sequence spans 367 residues: Developmentally-regulated GTP-binding protein 1 (367 aa).

Ser-2 is subject to N-acetylserine. Residues 2 to 16 (SSTLAKIAEIEAEMA) are required for interaction with STK16. Lys-22 is modified ((3S)-3-hydroxylysine). The OBG-type G domain occupies 65–290 (ARIGFVGFPS…LLEKIWDYLK (226 aa)). Residues 71-78 (GFPSVGKS), 96-100 (FTTLT), 117-120 (DLPG), 248-251 (NKID), and 271-273 (SAH) each bind GTP. Ser-78 and Thr-98 together coordinate Mg(2+). Thr-100 bears the Phosphothreonine; by STK16 mark. One can recognise a TGS domain in the interval 290-366 (KLVRIYTKPK…EDEDVIQIVK (77 aa)).

This sequence belongs to the TRAFAC class OBG-HflX-like GTPase superfamily. OBG GTPase family. As to quaternary structure, interacts (via its C-terminal) with TAL1. Interacts with DFRP1/ZC3H15; this interaction prevents DRG1 poly-ubiquitination and degradation by proteasome. DRG1-ZC3H15/DFRP1 complex co-sediments with polysomes. Interacts with STK16. Interacts with JMJD7. In terms of processing, sumoylated by UBE2I in response to MEKK1-mediated stimuli. Hydroxylated (with S stereochemistry) at C-3 of Lys-22 by JMJD7. Post-translationally, phosphorylated at Thr-100 by STK16. In terms of processing, polyubiquitinated; this modification induces proteolytic degradation and is impaired by interaction with ZC3H15.

It localises to the nucleus. Its subcellular location is the cytoplasm. The catalysed reaction is GTP + H2O = GDP + phosphate + H(+). The GTPase activity is enhanced by potassium ions as well as by DFRP1 binding. In terms of biological role, catalyzes the conversion of GTP to GDP through hydrolysis of the gamma-phosphate bond in GTP. Appears to have an intrinsic GTPase activity that is stimulated by ZC3H15/DFRP1 binding likely by increasing the affinity for the potassium ions. When hydroxylated at C-3 of 'Lys-22' by JMJD7, may bind to RNA and play a role in translation. Binds to microtubules and promotes microtubule polymerization and bundling that are required for mitotic spindle assembly during prophase to anaphase transition. GTPase activity is not necessary for these microtubule-related functions. The protein is Developmentally-regulated GTP-binding protein 1 (DRG1) of Bos taurus (Bovine).